The sequence spans 261 residues: Ribonuclease 3 (261 aa).

The 125-residue stretch at 20 to 144 (YFALYRMLGF…FIGAIYLDKG (125 aa)) folds into the RNase III domain. Glutamate 62 provides a ligand contact to Mg(2+). Aspartate 66 is a catalytic residue. Mg(2+) contacts are provided by asparagine 130 and glutamate 133. Glutamate 133 is an active-site residue. The 70-residue stretch at 172-241 (NFKSKLFEWC…SQMTWRKIRT (70 aa)) folds into the DRBM domain.

This sequence belongs to the ribonuclease III family. In terms of assembly, homodimer. It depends on Mg(2+) as a cofactor.

The protein resides in the cytoplasm. The enzyme catalyses Endonucleolytic cleavage to 5'-phosphomonoester.. In terms of biological role, digests double-stranded RNA. Involved in the processing of primary rRNA transcript to yield the immediate precursors to the large and small rRNAs (23S and 16S). Processes some mRNAs, and tRNAs when they are encoded in the rRNA operon. Processes pre-crRNA and tracrRNA of type II CRISPR loci if present in the organism. This is Ribonuclease 3 from Azobacteroides pseudotrichonymphae genomovar. CFP2.